The sequence spans 248 residues: Probable transcriptional regulatory protein Pcar_2335 (248 aa).

This sequence belongs to the TACO1 family.

The protein localises to the cytoplasm. In Syntrophotalea carbinolica (strain DSM 2380 / NBRC 103641 / GraBd1) (Pelobacter carbinolicus), this protein is Probable transcriptional regulatory protein Pcar_2335.